Here is a 501-residue protein sequence, read N- to C-terminus: DEAD-box ATP-dependent RNA helicase 36 (501 aa).

The tract at residues 1 to 68 (MEVDGEARPF…AAAVTEHAGD (68 aa)) is disordered. Over residues 36-46 (EEPPNPSPSPA) the composition is skewed to pro residues. Residues 59–68 (AAAVTEHAGD) are compositionally biased toward low complexity. The Q motif signature appears at 77–105 (STFAELGLSQWLVDVCDSLGMRVPTAVQR). The region spanning 108 to 281 (IPRALEGRDV…ELSGNNSYFF (174 aa)) is the Helicase ATP-binding domain. Residue 121–128 (AETGSGKT) participates in ATP binding. A DEAD box motif is present at residues 229 to 232 (DEAD). Residues 292-456 (TLKQLYIHVP…AYDGEMRDVN (165 aa)) enclose the Helicase C-terminal domain. Basic and acidic residues predominate over residues 473-486 (MADEGHEDKVQARK). A disordered region spans residues 473 to 501 (MADEGHEDKVQARKEQKKRAQERKRKHDE). A coiled-coil region spans residues 475–501 (DEGHEDKVQARKEQKKRAQERKRKHDE). Basic residues predominate over residues 487 to 501 (EQKKRAQERKRKHDE).

Belongs to the DEAD box helicase family. DDX49/DBP8 subfamily.

It catalyses the reaction ATP + H2O = ADP + phosphate + H(+). The chain is DEAD-box ATP-dependent RNA helicase 36 from Oryza sativa subsp. japonica (Rice).